A 251-amino-acid chain; its full sequence is Imidazole glycerol phosphate synthase subunit HisF (251 aa).

Active-site residues include D11 and D130.

It belongs to the HisA/HisF family. In terms of assembly, heterodimer of HisH and HisF.

The protein resides in the cytoplasm. It catalyses the reaction 5-[(5-phospho-1-deoxy-D-ribulos-1-ylimino)methylamino]-1-(5-phospho-beta-D-ribosyl)imidazole-4-carboxamide + L-glutamine = D-erythro-1-(imidazol-4-yl)glycerol 3-phosphate + 5-amino-1-(5-phospho-beta-D-ribosyl)imidazole-4-carboxamide + L-glutamate + H(+). It participates in amino-acid biosynthesis; L-histidine biosynthesis; L-histidine from 5-phospho-alpha-D-ribose 1-diphosphate: step 5/9. In terms of biological role, IGPS catalyzes the conversion of PRFAR and glutamine to IGP, AICAR and glutamate. The HisF subunit catalyzes the cyclization activity that produces IGP and AICAR from PRFAR using the ammonia provided by the HisH subunit. The sequence is that of Imidazole glycerol phosphate synthase subunit HisF from Chlorobium limicola (strain DSM 245 / NBRC 103803 / 6330).